The following is a 2554-amino-acid chain: Highly reducing polyketide synthase PKS6 (2554 aa).

Residues 1 to 48 (MGSLSAVPATNGNHAALNGSASTNGQHVNGSTHVNGNHSLNGSAQVNG) form a disordered region. Residues 8–48 (PATNGNHAALNGSASTNGQHVNGSTHVNGNHSLNGSAQVNG) show a composition bias toward polar residues. A Ketosynthase family 3 (KS3) domain is found at 56-481 (LEPIAVVGMS…GTNAHVVVDA (426 aa)). Active-site for beta-ketoacyl synthase activity residues include cysteine 230, histidine 367, and histidine 407. The interval 595-913 (VFSGQGAQYP…HYTGSLKRGE (319 aa)) is malonyl-CoA:ACP transacylase (MAT) domain. Residues 981–1119 (HELLGTLVHD…GLVQVILKSE (139 aa)) are N-terminal hotdog fold. The segment at 981–1281 (HELLGTLVHD…QAWGVVATKL (301 aa)) is dehydratase (DH) domain. One can recognise a PKS/mFAS DH domain in the interval 981-1287 (HELLGTLVHD…ATKLPDVSIG (307 aa)). The active-site Proton acceptor; for dehydratase activity is the histidine 1013. The interval 1137–1287 (AQHIPANQFY…ATKLPDVSIG (151 aa)) is C-terminal hotdog fold. Catalysis depends on aspartate 1200, which acts as the Proton donor; for dehydratase activity. The segment at 1451–1556 (VEVGAGTGSA…KTMLRPGGKL (106 aa)) is methyltransferase (CMet) domain. Positions 1840–2153 (GVLDTIRWVD…AGKHTGKVIL (314 aa)) are enoyl reductase (ER) domain. A ketoreductase (KR) domain region spans residues 2177–2353 (ATYLVVGGLG…TAYAVNIGAI (177 aa)). The Carrier domain maps to 2457–2534 (EAQDIICDAI…ELAEIVTKGS (78 aa)). Position 2494 is an O-(pantetheine 4'-phosphoryl)serine (serine 2494).

Its pathway is secondary metabolite biosynthesis. Highly reducing polyketide synthase; part of the gene cluster that mediates the biosynthesis of the lipopeptide fusaristatin A. Fusaristatin A consists of a polyketide chain linked to three amino acid residues glutamine (Gln), dehydroalanine (dehydro-Ala), and beta-aminoisobutyric acid. The biosynthesis starts with formation of a linear polyketide chain by the highly reducing polyketide synthase PKS6. The gene cluster does not contain an acyl-CoA ligase or an acyl-transferase, and it is therefore predicted that the polyketide is transferred directly to the nonribosomal peptide synthetase NRPS7. Modules 1-3 from NRPS7 incorporate dehydro-Ala, Gln, and beta-aminoisobutyric acid in the compound, which is released by cyclization. The beta-aminoisobutyric acid units are most likely not freely available to the NRPS, but can be synthesized from thymine, which requires a dehydrogenase, a monooxygenase, and an aminotransferase. The fusaristatin A cluster contains a cytochrome P450 monooxygenase (FGSG_08207) and an aminotransferase (FGSG_17085), which theoretically can perform two of the enzymatic steps. The enzymes may however also be involved in biosynthesis of dehydroalanine or modification of the polyketide. The dehydro-Ala residue can be a result of cyclization, where serine is dehydrated. The last gene of the cluster encodes a protein with an A/B barrel domain found in variable enzymes, which hampers functional prediction. The polypeptide is Highly reducing polyketide synthase PKS6 (Gibberella zeae (strain ATCC MYA-4620 / CBS 123657 / FGSC 9075 / NRRL 31084 / PH-1) (Wheat head blight fungus)).